Here is a 144-residue protein sequence, read N- to C-terminus: Gas vesicle protein I1 (144 aa).

A disordered region spans residues 1–144; the sequence is MSDKQQQKHK…SPTEDEVNDE (144 aa). Composition is skewed to basic residues over residues 7 to 17 and 26 to 46; these read QKHKQKARQAR and KARR…TRNR. Residues 75 to 94 are compositionally biased toward polar residues; the sequence is MPPQKSNAENAVRNSHSTVP. Residues 122–136 are compositionally biased toward low complexity; the sequence is SEASAPSDESASGSP.

The protein belongs to the gas vesicle GvpI family. In terms of assembly, gvpF to GvpM interact with each other in vitro, and may form multi-subunit complex(es). Interacts with GvpC1 and GvpO.

The protein resides in the gas vesicle. Functionally, proteins GvpF to GvpM might be involved in nucleating gas vesicle formation. A minor component of the gas vesicle. Gas vesicles are hollow, gas filled proteinaceous nanostructures found in several microbial planktonic microorganisms. They allow positioning of halobacteria at the optimal depth for growth in the poorly aerated, shallow brine pools of their habitat. Expression of a 9.5 kb p-vac DNA fragment containing 2 divergently transcribed regions (gvpD-gvpE-gvpF-gvpG-gvpH-gvpI-gvpJ-gvpK-gvpL-gvpM and gvpA-gvpC-gvpN-gvpO) allows H.volcanii to produce gas vesicles. A similar region restores gas vesicle production in H.halobium without the p-vac locus, but it still has the c-vac locus. This chain is Gas vesicle protein I1 (gvpI11), found in Halobacterium salinarum (strain ATCC 700922 / JCM 11081 / NRC-1) (Halobacterium halobium).